The sequence spans 636 residues: MASIEEIAHQIIEQQMGEISRSQPEISQTALMDGTTQRIQLVPSESSVSVPQRIQIVTDPQTGQKIQIVTALDQSGASKQFILTNNDGSLPSKVILTRQDSSQGKVYLTTPDAAGVNQLFISTPDVPAQHIQILSDTQCLDQNLNKQLVELCVVCGDKASGRHYGAVTCEGCKGFFKRSIRKNLVYTCRGSKDCVINKHYRNRCQYCRLQRCIALGMKQDSVQCERKPIEVSREKSSNCAASTEKIYIRKDLRSPLAATTTFVTENKTSRTTSLLDSGMLVNIQQSGVKNESILITPNKVDACQGDLSTLANVVTSLANLNKSKELPQTNTELSIIESLSNGDSSLSELAQDDQSNSEVTRAFDTLAKALNQSENSAQGSSECVGSNSNLTDANVEIEGPLLSDAHIAFRLTMPSPMPEYLNVHYICESASRLLFLSMHWARSIPSFQSLGQENSISLVKACWNELFSLGLAQCCQVMNVETILAAFVNHLHNSMQHDKLSADKVKLVMDHIFKLQEFCNSMVKLSVDGYEYAYLKAIALFSPDHPGLENVSHIEKLQEKAYMEFQDYVTKTYPEDTYRLSRLLLRLPALRLLNAAITEELFFAGLIGNVQIDSIIPYILRMETSDYNSQIIGLTV.

A DNA-binding region (nuclear receptor) is located at residues 149-224 (VELCVVCGDK…LGMKQDSVQC (76 aa)). NR C4-type zinc fingers lie at residues 152–172 (CVVC…CEGC) and 188–207 (CRGS…CQYC). One can recognise an NR LBD domain in the interval 382-623 (ECVGSNSNLT…SIIPYILRME (242 aa)).

The protein belongs to the nuclear hormone receptor family. NR2 subfamily.

The protein localises to the nucleus. In terms of biological role, orphan nuclear receptor. Binds the IR7 element in the promoter of its own gene in an autoregulatory negative feedback mechanism. Primarily repressor of a broad range of genes. Binds to hormone response elements (HREs) consisting of two 5'-AGGTCA-3' half site direct repeat consensus sequences. The sequence is that of Nuclear receptor subfamily 2 group C member 1 from Xenopus tropicalis (Western clawed frog).